The primary structure comprises 134 residues: Aspartate 1-decarboxylase (134 aa).

Ser-25 (schiff-base intermediate with substrate; via pyruvic acid) is an active-site residue. Ser-25 is modified (pyruvic acid (Ser)). Residue Thr-57 participates in substrate binding. Residue Tyr-58 is the Proton donor of the active site. 73–75 (GAA) contributes to the substrate binding site.

It belongs to the PanD family. As to quaternary structure, heterooctamer of four alpha and four beta subunits. The cofactor is pyruvate. Is synthesized initially as an inactive proenzyme, which is activated by self-cleavage at a specific serine bond to produce a beta-subunit with a hydroxyl group at its C-terminus and an alpha-subunit with a pyruvoyl group at its N-terminus.

The protein resides in the cytoplasm. It carries out the reaction L-aspartate + H(+) = beta-alanine + CO2. It participates in cofactor biosynthesis; (R)-pantothenate biosynthesis; beta-alanine from L-aspartate: step 1/1. Catalyzes the pyruvoyl-dependent decarboxylation of aspartate to produce beta-alanine. This Geobacter sp. (strain M21) protein is Aspartate 1-decarboxylase.